The following is a 1799-amino-acid chain: MVDPLKIFWVLTNSTYLVTKFVRIGIADKNDSPPYFDRFLYETEIDENADLQSTVLTVNAKDHNESTNIRYQITGGNIGNAFAVQNTTGVIYVASPLDYETRPRYELRLEATRNRKNNYTTVVINVRDVNDNPPVFDRQTYRTQITEEDDRNLPKRILQVTATDGDVDRPINIVYFLTGQGIDPDNPANSKFDINRTTGDIFVLKPLDRDQPNGRPQWRFTVFAQDEGGEGLVGYADIQVNLKDINDNAPQFPQGIYFGNVTENGTAGSSVMTMSAVDYDDPNESTNAKLIYSIEKNVIEEETGAPIFEIEPETGLIKTAVCCLDRERTPDYSIQVVAMDGGGLKGTGTASIRVKDLNDMPPQFTKDEWVTEVDETNGTYIPETPILTVTVQDEDETNTFQYKVVPNSGFGADKFAMVRNGDGTGSLKIIQPLDYEDPLQSSGFRFRIQVNDKGDDGPGGSDKYHVAYSWVVVKLRDINDNVPKFDREHIEVSIYEDTKVGTILEQFKATDADQGGHSKVAYKIVRSTNRKRQFAISDRGAVSIQRPLDRETQDRHHIQILAIDDGSPARTATATLTVIVKDVNDNAPTFAQDYKPTLPENVSGKKILEVAAKDPDDRLRGNGGPFTFRLDPLASDEIKAGFKVEYDRRGDNENGVAIISSLRPFDREAQKSYAIPIEIKDNGAPAMTGTSTLTVTIGDVNDNKMQPGSKSVLVYNYQGQSQDTPIGRVYVNDPDDWDVPDKKYYWEVQEHQRFKLDTDTGILTMRAGTRRGRYQLRFKVYDREHGQEDIPANLSVTVRDITAEAVQQAGSMRLSHITDEDFVRTWNPVKNQVEPSKLERFRNKLAELLYTDRDNVDVFSVQLKEGSPYPLTDVHFAARSATQQPYFKAVRLNGVVQMHREEIEKDVGLNITMVNINECLHEGKGKCGSNSCTSKVELGKKPYTVSVNRTALVGVRLDISAQCVCRARNFTHQDHNCRTHLCYNGGRCVETRNGPKCVACPVGYNGPRCQQSTRSFRGNGWAWYPPLQLCQESHLSLEFITRVADGLILYNGPIVPPKPEETVISDFIALELEQGYPRLLIDFGSGTLELRVKTKKTLDDGVWHRLDIFWDTENVRMVVDFCRTALVSEMEDGTPPEFDDNACQARGQIPPFAESLNLNQPLQLGGLYRQHFDQTLYNWQYAFSSKGFDGCIRNVIHNSEHYDLAFPALARNSFPACPQTDEVCLKTEHTARCWEHGNCVASLVQAKCHCQPGWMGPGCNVPTIPTTFKAQSYVKFALSFEPDRFSTQLQLRFRTREQGGELFRVSDQHHREYAILELRRGHLQFRYNLNSMRNEEQLLTLTAIAVNDGQWHVIRISRYGSAALMELDGGESRRYNESFHFTGHQWLTIDKQEGVYAGGKAEYTGIKTFEVQSDFQRSCLDDIRLDGKHLPLPPAMNGTQWGQATMARNLERNCPSNRPCSNVICPDPFDCVDLWNEYECTCSEGRIMSSDTKGCVDRNECLDLPCLNGATCINLEPRLRYRCICPEGYWGENCELVQEGQRLKLSMGALGAIFVCLIIILILALIFVLYSRKRKTTKKKKRSGPEKDVRETVISYEDEGGGEDDMTAFDITPLQIPISAQGGPPDIAACKMPIIYPVMTLLPPGQELNVAYLMEERKQRIDKDNNAPPFDDLRNFTFEGSGSIAESLSSLASGTDDENQDFNYLQNWGPRFNALAAMYVHDKAKASSQLPSDGGGGSGDGPGPGASSSSPLGGGGTGGGSGIPGNVLAVVATGSGAGPGGGGGSSGLMPLPEVDKVVL.

N-linked (GlcNAc...) asparagine glycosylation is found at Asn-13, Asn-64, Asn-86, Asn-118, Asn-195, Asn-260, Asn-264, Asn-283, and Asn-377. Cadherin domains lie at 37–136 (DRFL…PPVF), 137–252 (DRQT…APQF), 253–364 (PQGI…PPQF), 368–485 (EWVT…VPKF), 486–590 (DREH…APTF), 590–709 (FAQD…QPGS), and 708–812 (GSKS…AGSM). N-linked (GlcNAc...) asparagine glycosylation is found at Asn-601, Asn-793, Asn-910, Asn-948, and Asn-969. Residues 973 to 1010 (QDHNCRTHLCYNGGRCVETRNGPKCVACPVGYNGPRCQ) enclose the EGF-like 1 domain. 7 disulfide bridges follow: Cys-977-Cys-988, Cys-982-Cys-997, Cys-1000-Cys-1009, Cys-1191-Cys-1217, Cys-1224-Cys-1239, Cys-1233-Cys-1248, and Cys-1250-Cys-1259. A Laminin G-like 1 domain is found at 1011-1217 (QSTRSFRGNG…ALARNSFPAC (207 aa)). Positions 1220 to 1260 (TDEVCLKTEHTARCWEHGNCVASLVQAKCHCQPGWMGPGCN) constitute an EGF-like 2 domain. Positions 1263–1454 (TIPTTFKAQS…TMARNLERNC (192 aa)) constitute a Laminin G-like 2 domain. N-linked (GlcNAc...) asparagine glycosylation is found at Asn-1376 and Asn-1437. 4 disulfides stabilise this stretch: Cys-1419/Cys-1454, Cys-1501/Cys-1512, Cys-1506/Cys-1523, and Cys-1525/Cys-1534. Residues 1497-1535 (DRNECLDLPCLNGATCINLEPRLRYRCICPEGYWGENCE) form the EGF-like 3; calcium-binding domain. The helical transmembrane segment at 1549–1569 (ALGAIFVCLIIILILALIFVL) threads the bilayer. A disordered region spans residues 1726–1799 (ASSQLPSDGG…PLPEVDKVVL (74 aa)). 3 stretches are compositionally biased toward gly residues: residues 1733–1744 (DGGGGSGDGPGP), 1752–1763 (LGGGGTGGGSGI), and 1775–1786 (SGAGPGGGGGSS).

It is found in the cell membrane. Cadherins are calcium-dependent cell adhesion proteins. They preferentially interact with themselves in a homophilic manner in connecting cells. This is Putative neural-cadherin 2 (CadN2) from Drosophila melanogaster (Fruit fly).